The sequence spans 353 residues: Probable butyrate kinase (353 aa).

The protein belongs to the acetokinase family.

It localises to the cytoplasm. The catalysed reaction is butanoate + ATP = butanoyl phosphate + ADP. The protein is Probable butyrate kinase of Bacteroides thetaiotaomicron (strain ATCC 29148 / DSM 2079 / JCM 5827 / CCUG 10774 / NCTC 10582 / VPI-5482 / E50).